The primary structure comprises 318 residues: MTSIVFMGTPQFSVPILEALVANDYQILAVVTQPDRKVGRKQVLQQTPVKEAAVRLDLPVFQPEKLSGSPELADVIALQPDLIVTAAYGQFLPTKLLEAAKIAAINVHGSLLPKYRGGAPIQYAVLNGDSEIGITIMHMAKKMDAGDMIEQASIPIEATDDTGSLFDKLSYVGRDLLLKTLPGIIAQTAPRTPQDEVQVTFAYNITKEQEQLDINQPAEQLLNQIRALRPQPGAWLAVNGQRTKIWQATVAETTTDQAAGVVVALNKKDFELAAGNGTVLKITEIQPAGKAKMPVQSYLNGVGKQLAVGQQVVVQDAE.

(6S)-5,6,7,8-tetrahydrofolate is bound at residue 110 to 113 (SLLP).

The protein belongs to the Fmt family.

It catalyses the reaction L-methionyl-tRNA(fMet) + (6R)-10-formyltetrahydrofolate = N-formyl-L-methionyl-tRNA(fMet) + (6S)-5,6,7,8-tetrahydrofolate + H(+). Its function is as follows. Attaches a formyl group to the free amino group of methionyl-tRNA(fMet). The formyl group appears to play a dual role in the initiator identity of N-formylmethionyl-tRNA by promoting its recognition by IF2 and preventing the misappropriation of this tRNA by the elongation apparatus. In Latilactobacillus sakei subsp. sakei (strain 23K) (Lactobacillus sakei subsp. sakei), this protein is Methionyl-tRNA formyltransferase.